The chain runs to 227 residues: Transmembrane emp24 domain-containing protein 1 (227 aa).

The signal sequence occupies residues 1–24 (MMAAGAAVALALWLLLPAVGVGEA). The Extracellular segment spans residues 25–194 (GPPPIQDGEF…LQEDNLERVN (170 aa)). In terms of domain architecture, GOLD spans 43-125 (KQCFYQSAPA…EKLVFFELIF (83 aa)). Positions 145–170 (EMLDVKMEDIKESIETMRTRLERSIQ) form a coiled coil. The helical transmembrane segment at 195–215 (FWSAANVAVLLLVAVLQVCTL) threads the bilayer. Residues 216-227 (KRFFHDKRPVPT) are Cytoplasmic-facing. Positions 218–219 (FF) match the COPII vesicle coat-binding motif. A COPI vesicle coat-binding motif is present at residues 218–227 (FFHDKRPVPT).

This sequence belongs to the EMP24/GP25L family. As to quaternary structure, homodimer in endoplasmic reticulum, endoplasmic reticulum-Golgi intermediate compartment and cis-Golgi network. Interacts with IL1RL1. Interacts with RNF26; this interaction is important to modulate innate immune signaling through the cGAS-STING pathway. In terms of tissue distribution, widely expressed.

It is found in the cell membrane. Its subcellular location is the endoplasmic reticulum membrane. The protein resides in the golgi apparatus. The protein localises to the cis-Golgi network membrane. It localises to the endoplasmic reticulum-Golgi intermediate compartment membrane. In terms of biological role, potential role in vesicular protein trafficking, mainly in the early secretory pathway. May act as a cargo receptor at the lumenal side for incorporation of secretory cargo molecules into transport vesicles and may be involved in vesicle coat formation at the cytoplasmic side. Plays a positive role in IL-33-mediated IL-8 and IL-6 production by interacting with interleukin-33 receptor IL1RL1. Plays also a role in the modulation of innate immune signaling through the cGAS-STING pathway by interacting with RNF26. The sequence is that of Transmembrane emp24 domain-containing protein 1 (Tmed1) from Mus musculus (Mouse).